We begin with the raw amino-acid sequence, 178 residues long: Large ribosomal subunit protein uL6 (178 aa).

This sequence belongs to the universal ribosomal protein uL6 family. As to quaternary structure, part of the 50S ribosomal subunit.

In terms of biological role, this protein binds to the 23S rRNA, and is important in its secondary structure. It is located near the subunit interface in the base of the L7/L12 stalk, and near the tRNA binding site of the peptidyltransferase center. In Lactococcus lactis subsp. cremoris (strain SK11), this protein is Large ribosomal subunit protein uL6.